Consider the following 113-residue polypeptide: ATP-dependent Clp protease adapter protein ClpS (113 aa).

Residues 1–26 form a disordered region; sequence MLMQPLMMSDNPDDESDLGLLTKTRP.

This sequence belongs to the ClpS family. As to quaternary structure, binds to the N-terminal domain of the chaperone ClpA.

In terms of biological role, involved in the modulation of the specificity of the ClpAP-mediated ATP-dependent protein degradation. In Ruegeria sp. (strain TM1040) (Silicibacter sp.), this protein is ATP-dependent Clp protease adapter protein ClpS.